Reading from the N-terminus, the 212-residue chain is MSCRRGALIVLEGVDRAGKTTQCQKLVQAIQQSGRAAEIMRFPDRTTKIGQLISSYLEKKSNLEDHTVHLLFSANRWEMVPVMKQKLEEGINLVVDRYAFSGVAFTSAKPGFSLEWCMNPDVGLPKPDLVMFLQLNPNVAANRGEYGNERYETSAFQRTVQQRFEELMQDTSINWKVIDAARTIEEVHKDIKDLSENIISLAEEQPVGELWR.

ATP-binding positions include 16–21 (RAGKTT), Arg-97, Arg-182, and Lys-192.

The protein belongs to the thymidylate kinase family. Requires Mg(2+) as cofactor.

The catalysed reaction is dTMP + ATP = dTDP + ADP. It participates in pyrimidine metabolism; dTTP biosynthesis. In terms of biological role, catalyzes the phosphorylation of thymidine monophosphate (dTMP) to thymidine diphosphate (dTDP), the immediate precursor for the DNA building block dTTP, with ATP as the preferred phosphoryl donor in the presence of Mg(2+). The chain is Thymidylate kinase (dtymk) from Danio rerio (Zebrafish).